Consider the following 233-residue polypeptide: ATP synthase subunit a (233 aa).

Helical transmembrane passes span 27–47 (ANFV…FAIL), 85–105 (YLAF…IGVV), 114–134 (VPSV…IVGV), 143–163 (LAHF…IELV), 189–209 (VFLK…HVFV), and 210–230 (SFLQ…GAVA).

The protein belongs to the ATPase A chain family. In terms of assembly, F-type ATPases have 2 components, CF(1) - the catalytic core - and CF(0) - the membrane proton channel. CF(1) has five subunits: alpha(3), beta(3), gamma(1), delta(1), epsilon(1). CF(0) has three main subunits: a(1), b(2) and c(9-12). The alpha and beta chains form an alternating ring which encloses part of the gamma chain. CF(1) is attached to CF(0) by a central stalk formed by the gamma and epsilon chains, while a peripheral stalk is formed by the delta and b chains.

The protein resides in the cell inner membrane. In terms of biological role, key component of the proton channel; it plays a direct role in the translocation of protons across the membrane. The chain is ATP synthase subunit a from Solibacter usitatus (strain Ellin6076).